Here is a 573-residue protein sequence, read N- to C-terminus: Adenine deaminase (573 aa).

It belongs to the metallo-dependent hydrolases superfamily. Adenine deaminase family. Requires Mn(2+) as cofactor.

The catalysed reaction is adenine + H2O + H(+) = hypoxanthine + NH4(+). In Bacillus licheniformis (strain ATCC 14580 / DSM 13 / JCM 2505 / CCUG 7422 / NBRC 12200 / NCIMB 9375 / NCTC 10341 / NRRL NRS-1264 / Gibson 46), this protein is Adenine deaminase.